Here is a 43-residue protein sequence, read N- to C-terminus: Protein PsbN (43 aa).

A helical transmembrane segment spans residues 7-29 (ITIFLSGLLVSFTGYALYTAFGQ).

Belongs to the PsbN family.

It localises to the plastid membrane. May play a role in photosystem I and II biogenesis. The protein is Protein PsbN of Cuscuta reflexa (Southern Asian dodder).